A 265-amino-acid chain; its full sequence is MSSSREENVYLAKLAEQAERYEEMVEFMEKVAKTVDTDELTVEERNLLSVAYKNVIGARRASWRIISSIEQKEESRGNDDHVSIIKDYRGKIETELSKICDGILNLLDSHLVPTASLAESKVFYLKMKGDYHRYLAEFKTGAERKEAAESTLVAYKSAQDIALADLAPTHPIRLGLALNFSVFYYEILNSPDRACSLAKQAFDEAISELDTLGEESYKDSTLIMQLLRDNLTLWNSDINDEAGGDEIKEASKHEPEEGKPAETGQ.

Phosphoserine is present on residues Ser-67, Ser-109, and Ser-190. Position 211 is a phosphothreonine (Thr-211). Positions 242–265 (AGGDEIKEASKHEPEEGKPAETGQ) are disordered. Over residues 245-265 (DEIKEASKHEPEEGKPAETGQ) the composition is skewed to basic and acidic residues.

Belongs to the 14-3-3 family. As to quaternary structure, component of the SERK1 signaling complex, composed of KAPP, CDC48A, GRF6 or GRF7, SERK1, SERK2, SERK3/BAK1 and BRI1. Interacts with DREB1A and DREB1B in the nucleus. Interacts with CINV1.

It is found in the nucleus. Its subcellular location is the cytoplasm. Is associated with a DNA binding complex that binds to the G box, a well-characterized cis-acting DNA regulatory element found in plant genes. In Arabidopsis thaliana (Mouse-ear cress), this protein is 14-3-3-like protein GF14 nu (GRF7).